The following is a 111-amino-acid chain: Large ribosomal subunit protein uL24 (111 aa).

It belongs to the universal ribosomal protein uL24 family. As to quaternary structure, part of the 50S ribosomal subunit.

One of two assembly initiator proteins, it binds directly to the 5'-end of the 23S rRNA, where it nucleates assembly of the 50S subunit. In terms of biological role, one of the proteins that surrounds the polypeptide exit tunnel on the outside of the subunit. The polypeptide is Large ribosomal subunit protein uL24 (Chlamydia trachomatis serovar A (strain ATCC VR-571B / DSM 19440 / HAR-13)).